The following is a 397-amino-acid chain: Succinate--CoA ligase [ADP-forming] subunit beta (397 aa).

Positions 9-254 (KALLAQYGAP…ETEEDPKELA (246 aa)) constitute an ATP-grasp domain. ATP is bound by residues lysine 46, 53-55 (GRG), glutamate 109, serine 112, and glutamate 117. The Mg(2+) site is built by asparagine 209 and aspartate 223. Substrate-binding positions include asparagine 274 and 331–333 (GIM).

It belongs to the succinate/malate CoA ligase beta subunit family. As to quaternary structure, heterotetramer of two alpha and two beta subunits. Requires Mg(2+) as cofactor.

The catalysed reaction is succinate + ATP + CoA = succinyl-CoA + ADP + phosphate. It carries out the reaction GTP + succinate + CoA = succinyl-CoA + GDP + phosphate. It functions in the pathway carbohydrate metabolism; tricarboxylic acid cycle; succinate from succinyl-CoA (ligase route): step 1/1. Succinyl-CoA synthetase functions in the citric acid cycle (TCA), coupling the hydrolysis of succinyl-CoA to the synthesis of either ATP or GTP and thus represents the only step of substrate-level phosphorylation in the TCA. The beta subunit provides nucleotide specificity of the enzyme and binds the substrate succinate, while the binding sites for coenzyme A and phosphate are found in the alpha subunit. The protein is Succinate--CoA ligase [ADP-forming] subunit beta of Jannaschia sp. (strain CCS1).